We begin with the raw amino-acid sequence, 321 residues long: Peroxidase 4 (321 aa).

Residues 1–25 (MASSSFSIVVVALGVLALFAGSSSA) form the signal peptide. Pyrrolidone carboxylic acid is present on Gln-26. 4 cysteine pairs are disulfide-bonded: Cys-36-Cys-116, Cys-69-Cys-74, Cys-122-Cys-317, and Cys-201-Cys-226. Catalysis depends on His-67, which acts as the Proton acceptor. Positions 68, 71, 73, 75, and 77 each coordinate Ca(2+). Position 164 (Pro-164) interacts with substrate. His-194 is a heme b binding site. Thr-195 lines the Ca(2+) pocket. Asn-210 carries an N-linked (GlcNAc...) asparagine glycan. Residues Asp-241, Thr-244, and Asp-249 each coordinate Ca(2+).

Belongs to the peroxidase family. Classical plant (class III) peroxidase subfamily. It depends on heme b as a cofactor. Ca(2+) serves as cofactor.

The protein localises to the secreted. The enzyme catalyses 2 a phenolic donor + H2O2 = 2 a phenolic radical donor + 2 H2O. Functionally, removal of H(2)O(2), oxidation of toxic reductants, biosynthesis and degradation of lignin, suberization, auxin catabolism, response to environmental stresses such as wounding, pathogen attack and oxidative stress. These functions might be dependent on each isozyme/isoform in each plant tissue. The polypeptide is Peroxidase 4 (Vitis vinifera (Grape)).